The primary structure comprises 139 residues: GSK3B-interacting protein (139 aa).

Residues 41 to 45 are required for PRKAR2A interaction; contributes to a protective effect against H(2)O(2)-induced apoptosis; the sequence is VNDVL. An interaction with GSK3B and acts as a GSK3B inhibitor region spans residues 115-139; sequence SPAYREAFGNALLQRLEALKRDGQS.

The protein belongs to the GSKIP family. In terms of assembly, forms a complex composed of PRKAR2A or PRKAR2B, GSK3B and GSKIP through GSKIP interaction; facilitates PKA-induced phosphorylation of GSK3B leading to GSK3B inactivation; recruits DNM1L through GSK3B for PKA-mediated phosphorylation of DNM1L; promotes beta-catenin degradation through GSK3B-induced phosphorylation of beta-catenin; stabilizes beta-catenin and enhances Wnt-induced signaling through PKA-induced phosphorylation of beta-catenin. Interacts with GSK3B; induces GSK3B-mediated phosphorylation of GSKIP and inhibits GSK3B kinase activity. Post-translationally, phosphorylated by GSK3B.

The protein localises to the cytoplasm. It is found in the nucleus. Its function is as follows. A-kinase anchoring protein for GSK3B and PKA that regulates or facilitates their kinase activity towards their targets. The ternary complex enhances Wnt-induced signaling by facilitating the GSK3B- and PKA-induced phosphorylation of beta-catenin leading to beta-catenin degradation and stabilization respectively. Upon cAMP activation, the ternary complex contributes to neuroprotection against oxidative stress-induced apoptosis by facilitating the PKA-induced phosphorylation of DML1 and PKA-induced inactivation of GSK3B. During neurite outgrowth promotes neuron proliferation; while increases beta-catenin-induced transcriptional activity through GSK3B kinase activity inhibition, reduces N-cadherin level to promote cell cycle progression. May play a role in cleft palate formation and is required for postnatal life through modulation of the activity of GSK3B during development. The sequence is that of GSK3B-interacting protein from Mus musculus (Mouse).